The following is a 1905-amino-acid chain: Low-density lipoprotein receptor-related protein 4 (1905 aa).

The first 20 residues, 1–20, serve as a signal peptide directing secretion; it reads MRRWWGALLLGALLCAHGIA. Residues 21-1725 are Extracellular-facing; that stretch reads SSLECACGRS…AAPGEGLHVS (1705 aa). 8 LDL-receptor class A domains span residues 26 to 67, 70 to 106, 109 to 144, 147 to 183, 190 to 226, 230 to 266, 269 to 305, and 311 to 350; these read ACGR…DGCT, TCSP…QDCP, ECEE…EQCD, KCSD…ESCP, PCNL…SDCS, PCRS…RNCT, MCTA…ENCE, and QCAS…QNCR. Disulfide bonds link Cys27–Cys44, Cys34–Cys57, Cys51–Cys66, Cys71–Cys83, Cys78–Cys96, Cys90–Cys105, Cys110–Cys122, Cys117–Cys135, Cys129–Cys143, Cys148–Cys160, Cys155–Cys173, Cys167–Cys182, Cys191–Cys203, Cys198–Cys216, Cys210–Cys225, Cys231–Cys243, Cys238–Cys256, Cys250–Cys265, Cys270–Cys282, Cys277–Cys295, Cys289–Cys304, Cys312–Cys324, Cys319–Cys337, Cys331–Cys349, Cys358–Cys369, Cys365–Cys378, Cys380–Cys393, Cys399–Cys409, Cys405–Cys418, and Cys420–Cys433. N-linked (GlcNAc...) asparagine glycosylation is present at Asn264. An EGF-like 1; atypical domain is found at 354 to 394; sequence GEENCNVNNGGCAQKCQMVRGAVQCTCHTGYRLTEDGRTCQ. Positions 395–434 constitute an EGF-like 2; calcium-binding domain; sequence DVNECAEEGYCSQGCTNTEGAFQCWCEAGYELRPDRRSCK. LDL-receptor class B repeat units lie at residues 480 to 522, 523 to 565, 566 to 609, 610 to 652, and 653 to 693; these read ELVF…DWVH, DKLY…HPME, GTIY…DYAG, RRMY…FEDS, and LYWT…LHPQ. N-linked (GlcNAc...) asparagine glycosylation is present at Asn498. Positions 698-737 constitute an EGF-like 3 domain; sequence GKNRCGDNNGGCTHLCLPSGQNYTCACPTGFRKINSHACA. 3 disulfide bridges follow: Cys702–Cys713, Cys709–Cys722, and Cys724–Cys736. An N-linked (GlcNAc...) asparagine glycan is attached at Asn719. LDL-receptor class B repeat units follow at residues 785–827, 828–870, 871–914, 915–956, and 957–998; these read DHVY…DWVT, NKLY…EPMG, GYMY…DYGS, QRLY…LYGQ, and RIYW…FHRQ. Residue Asn901 is glycosylated (N-linked (GlcNAc...) asparagine). Residue Asn1077 is glycosylated (N-linked (GlcNAc...) asparagine). 10 LDL-receptor class B repeats span residues 1093–1135, 1136–1178, 1179–1222, 1223–1263, 1264–1306, 1397–1439, 1440–1482, 1483–1526, 1527–1568, and 1569–1610; these read GKVY…DAIG, RKVY…YHEM, GFMY…DKTS, SQLL…LLDS, YIYW…DRAQ, GKVY…DWVA, RNLY…FPRK, GYLF…DYDT, RRIY…QDRW, and IYWT…SPQR. Residues Asn1415 and Asn1467 are each glycosylated (N-linked (GlcNAc...) asparagine). Residues 1661–1696 form a disordered region; sequence ATSMNEKSPVLPNTLPTTLHSSTTKTRTSLEGAGGR. The segment covering 1674-1690 has biased composition (low complexity); it reads TLPTTLHSSTTKTRTSL. A helical transmembrane segment spans residues 1726–1746; it reads YAIGGLLSILLILLVIAALML. The Cytoplasmic portion of the chain corresponds to 1747 to 1905; the sequence is YRHRKSKFTD…ERKLSSESQV (159 aa). The disordered stretch occupies residues 1852-1905; the sequence is ASSGSLDDTETEQLLQEEQSECSSVHTAATPERRGSLPDTGWKHERKLSSESQV. Residues 1882–1905 show a composition bias toward basic and acidic residues; sequence PERRGSLPDTGWKHERKLSSESQV.

Belongs to the LDLR family. Homooligomer. Interacts with MUSK; the heterodimer forms an AGRIN receptor complex that binds AGRIN resulting in activation of MUSK. Interacts (via the extracellular domain) with SOST; the interaction facilitates the inhibition of Wnt signaling. Interacts with MESD; the interaction promotes glycosylation of LRP4 and its cell-surface expression. N-glycosylation is required for cell surface location.

The protein resides in the cell membrane. Functionally, mediates SOST-dependent inhibition of bone formation. Functions as a specific facilitator of SOST-mediated inhibition of Wnt signaling. Plays a key role in the formation and the maintenance of the neuromuscular junction (NMJ), the synapse between motor neuron and skeletal muscle. Directly binds AGRIN and recruits it to the MUSK signaling complex. Mediates the AGRIN-induced phosphorylation of MUSK, the kinase of the complex. The activation of MUSK in myotubes induces the formation of NMJ by regulating different processes including the transcription of specific genes and the clustering of AChR in the postsynaptic membrane. Alternatively, may be involved in the negative regulation of the canonical Wnt signaling pathway, being able to antagonize the LRP6-mediated activation of this pathway. More generally, has been proposed to function as a cell surface endocytic receptor binding and internalizing extracellular ligands for degradation by lysosomes. Plays an essential role in the process of digit differentiation. The sequence is that of Low-density lipoprotein receptor-related protein 4 (Lrp4) from Mus musculus (Mouse).